The following is a 63-amino-acid chain: Large ribosomal subunit protein uL30 (63 aa).

Belongs to the universal ribosomal protein uL30 family. Part of the 50S ribosomal subunit.

In Rickettsia massiliae (strain Mtu5), this protein is Large ribosomal subunit protein uL30.